Consider the following 577-residue polypeptide: Pentatricopeptide repeat-containing protein At2g01390 (577 aa).

10 PPR repeats span residues 121-155 (DHFT…GVLI), 156-190 (DTVT…GCEP), 191-225 (TVVS…RVSP), 226-260 (NCHT…GVQP), 261-295 (DKAA…GVVL), 382-416 (DSFV…GIHL), 417-451 (KKSA…QHSL), 452-482 (GCYQ…LPDD), 485-519 (GVAA…EIMP), and 520-554 (SLGT…LVAS).

It belongs to the PPR family. P subfamily.

The chain is Pentatricopeptide repeat-containing protein At2g01390 from Arabidopsis thaliana (Mouse-ear cress).